The following is a 362-amino-acid chain: Leucoanthocyanidin dioxygenase (362 aa).

The 103-residue stretch at 211–313 (MEELLLQKKI…RISWAVFCEP (103 aa)) folds into the Fe2OG dioxygenase domain. Positions 238, 240, and 294 each coordinate Fe cation.

It belongs to the iron/ascorbate-dependent oxidoreductase family. Requires Fe cation as cofactor. L-ascorbate is required as a cofactor.

The catalysed reaction is a (2R,3S,4S)-leucoanthocyanidin + 2-oxoglutarate + O2 = a 4-H-anthocyanidin with a 3-hydroxy group + succinate + CO2 + 2 H2O. It participates in pigment biosynthesis; anthocyanin biosynthesis. Functionally, oxidation of leucoanthocyanidins into anthocyanidins. This is Leucoanthocyanidin dioxygenase from Vitis vinifera (Grape).